The primary structure comprises 208 residues: MKPICVVLSGAGISAESGIPTYRAEDGLWAGHKIEDVCTPEALQRNRKQVLAFYNERRRNCAEAKPNAAHKVLVELERSYNVQIITQNVEDLHERAGSTNVLHLHGELTKARSSFDPDYIVPCMGDQSVNDKDPNGHPMRPHIVFFGESVPVLEPAIDLVSQADIVLVIGTSLQVYPANGLVNEAPKNAQIYLIDPNPNTGFNPVTGW.

The Deacetylase sirtuin-type domain occupies 1 to 208; it reads MKPICVVLSG…NTGFNPVTGW (208 aa). 10-29 serves as a coordination point for NAD(+); sequence GAGISAESGIPTYRAEDGLW. Tyr54 and Arg57 together coordinate substrate. 87–90 contacts NAD(+); it reads QNVE. His105 serves as the catalytic Proton acceptor. NAD(+) contacts are provided by residues 170 to 172 and 197 to 199; these read GTS and NPN.

Belongs to the sirtuin family. Class III subfamily.

It localises to the cytoplasm. It carries out the reaction N(6)-acetyl-L-lysyl-[protein] + NAD(+) + H2O = 2''-O-acetyl-ADP-D-ribose + nicotinamide + L-lysyl-[protein]. It catalyses the reaction N(6)-succinyl-L-lysyl-[protein] + NAD(+) + H2O = 2''-O-succinyl-ADP-D-ribose + nicotinamide + L-lysyl-[protein]. Its function is as follows. NAD-dependent lysine deacetylase and desuccinylase that specifically removes acetyl and succinyl groups on target proteins. Modulates the activities of several proteins which are inactive in their acylated form. The polypeptide is NAD-dependent protein deacylase (Aggregatibacter actinomycetemcomitans (Actinobacillus actinomycetemcomitans)).